Consider the following 467-residue polypeptide: Probable glycerol-3-phosphate dehydrogenase [NAD(+)] 2, cytosolic (467 aa).

NAD(+) contacts are provided by residues 47 to 52, K195, and A234; that span reads GAGAWG. K195 contacts substrate. Residue K284 is the Proton acceptor of the active site. 2 residues coordinate NAD(+): R346 and Q374. 346–347 serves as a coordination point for substrate; the sequence is RN.

The protein belongs to the NAD-dependent glycerol-3-phosphate dehydrogenase family.

The protein localises to the cytoplasm. Its subcellular location is the cytosol. The catalysed reaction is sn-glycerol 3-phosphate + NAD(+) = dihydroxyacetone phosphate + NADH + H(+). In terms of biological role, may be involved in cell redox homeostasis. The sequence is that of Probable glycerol-3-phosphate dehydrogenase [NAD(+)] 2, cytosolic from Oryza sativa subsp. japonica (Rice).